Here is a 176-residue protein sequence, read N- to C-terminus: SsrA-binding protein (176 aa).

The interval 1–33 (MTEAGAKKAAGKKSGKGKGKNAKKNQPNITPVA) is disordered. Residues 9 to 23 (AAGKKSGKGKGKNAK) are compositionally biased toward basic residues.

Belongs to the SmpB family.

The protein resides in the cytoplasm. In terms of biological role, required for rescue of stalled ribosomes mediated by trans-translation. Binds to transfer-messenger RNA (tmRNA), required for stable association of tmRNA with ribosomes. tmRNA and SmpB together mimic tRNA shape, replacing the anticodon stem-loop with SmpB. tmRNA is encoded by the ssrA gene; the 2 termini fold to resemble tRNA(Ala) and it encodes a 'tag peptide', a short internal open reading frame. During trans-translation Ala-aminoacylated tmRNA acts like a tRNA, entering the A-site of stalled ribosomes, displacing the stalled mRNA. The ribosome then switches to translate the ORF on the tmRNA; the nascent peptide is terminated with the 'tag peptide' encoded by the tmRNA and targeted for degradation. The ribosome is freed to recommence translation, which seems to be the essential function of trans-translation. The chain is SsrA-binding protein from Rhodopirellula baltica (strain DSM 10527 / NCIMB 13988 / SH1).